The following is a 141-amino-acid chain: Large ribosomal subunit protein uL11 (141 aa).

This sequence belongs to the universal ribosomal protein uL11 family. Part of the ribosomal stalk of the 50S ribosomal subunit. Interacts with L10 and the large rRNA to form the base of the stalk. L10 forms an elongated spine to which L12 dimers bind in a sequential fashion forming a multimeric L10(L12)X complex. One or more lysine residues are methylated.

Its function is as follows. Forms part of the ribosomal stalk which helps the ribosome interact with GTP-bound translation factors. In Ruegeria sp. (strain TM1040) (Silicibacter sp.), this protein is Large ribosomal subunit protein uL11.